A 393-amino-acid chain; its full sequence is Triacylglycerol lipase 1 (393 aa).

An N-terminal signal peptide occupies residues 1–20; sequence MKWLLVAVLTSLTIFSALTQ. Asparagine 41 is a glycosylation site (N-linked (GlcNAc...) asparagine). Serine 166 serves as the catalytic Nucleophile. A glycan (N-linked (GlcNAc...) asparagine) is linked at asparagine 261. Catalysis depends on charge relay system residues aspartate 334 and histidine 363.

This sequence belongs to the AB hydrolase superfamily. Lipase family. As to expression, expressed in seedlings, roots, leaves, flowers and siliques. Specifically expressed in the epidermis.

The protein resides in the secreted. The enzyme catalyses a triacylglycerol + H2O = a diacylglycerol + a fatty acid + H(+). The catalysed reaction is 1,2,3-tributanoylglycerol + H2O = dibutanoylglycerol + butanoate + H(+). It catalyses the reaction 1,2,3-trioctanoylglycerol + H2O = dioctanoylglycerol + octanoate + H(+). It participates in lipid metabolism; glycerolipid metabolism. Its function is as follows. Triacylglycerol (TAG) lipase active on triolein, trioctanoin, tributyrin and 1,3-Diolein, but not on phospho- and galactolipids. Involved but dispensable for TAG storage breakdown during seed germination. The polypeptide is Triacylglycerol lipase 1 (Arabidopsis thaliana (Mouse-ear cress)).